We begin with the raw amino-acid sequence, 198 residues long: Ribonuclease HII (198 aa).

An RNase H type-2 domain is found at 3 to 194 (RRVCGVDEAG…VKRCLALGQQ (192 aa)). 3 residues coordinate a divalent metal cation: Asp-9, Glu-10, and Asp-101.

It belongs to the RNase HII family. Mn(2+) is required as a cofactor. Requires Mg(2+) as cofactor.

It localises to the cytoplasm. The enzyme catalyses Endonucleolytic cleavage to 5'-phosphomonoester.. Endonuclease that specifically degrades the RNA of RNA-DNA hybrids. The polypeptide is Ribonuclease HII (Laribacter hongkongensis (strain HLHK9)).